Here is a 343-residue protein sequence, read N- to C-terminus: Heat-inducible transcription repressor HrcA (343 aa).

This sequence belongs to the HrcA family.

Its function is as follows. Negative regulator of class I heat shock genes (grpE-dnaK-dnaJ and groELS operons). Prevents heat-shock induction of these operons. This chain is Heat-inducible transcription repressor HrcA, found in Clostridium acetobutylicum (strain ATCC 824 / DSM 792 / JCM 1419 / IAM 19013 / LMG 5710 / NBRC 13948 / NRRL B-527 / VKM B-1787 / 2291 / W).